A 72-amino-acid polypeptide reads, in one-letter code: Lantibiotic Flvbeta.e (72 aa).

Residues 1-34 (MNNKEFNMEQFKKLAAVVSEDELDEMLDENVTGA) constitute a propeptide, cleaved by FlvT. The segment at residues 36–40 (SSIPC) is a cross-link (lanthionine (Ser-Cys); by FlvM2). Ser-37 is modified (2,3-didehydroalanine (Ser); by FlvM2). A 2,3-didehydrobutyrine; by FlvM2 mark is found at Thr-48 and Thr-49. 3 consecutive cross-links (beta-methyllanthionine (Thr-Cys); by FlvM2) follow at residues 55-61 (TTGFDWC), 63-66 (TGAC), and 67-70 (TTSC).

In terms of processing, contains LL-lanthionine and DL-beta-methyllanthionine, when coepressed in E.coli with the flavecin synthetase FlvM2.

It is found in the secreted. Lanthionine-containing peptide antibiotic (lantibiotic) that is probably active on Gram-positive bacteria, since its analog [Del1]Flvbeta.e shows antibacterial activity against Gram-positive bacteria. This activity is not synergistically enhanced by [Del2]Flvalpha.a, an analog of Flvalpha.a, which is encoded by the same operon than Flvbeta.e. The bactericidal activity of lantibiotics is based on depolarization of energized bacterial cytoplasmic membranes, initiated by the formation of aqueous transmembrane pores. The chain is Lantibiotic Flvbeta.e from Ruminococcus flavefaciens.